A 492-amino-acid polypeptide reads, in one-letter code: Ketol-acid reductoisomerase (NADP(+)) (492 aa).

Residues 15 to 208 form the KARI N-terminal Rossmann domain; it reads AQLGKCRFMA…GGDRAGVLES (194 aa). Residues 45–48, R68, R76, S78, and 108–110 contribute to the NADP(+) site; these read CGAQ and DKQ. Residue H132 is part of the active site. An NADP(+)-binding site is contributed by G158. KARI C-terminal knotted domains follow at residues 209-344 and 345-485; these read SFVA…KAPP and FEGK…MTDM. Positions 217, 221, 389, and 393 each coordinate Mg(2+). Position 414 (S414) interacts with substrate.

This sequence belongs to the ketol-acid reductoisomerase family. Mg(2+) is required as a cofactor.

The catalysed reaction is (2R)-2,3-dihydroxy-3-methylbutanoate + NADP(+) = (2S)-2-acetolactate + NADPH + H(+). The enzyme catalyses (2R,3R)-2,3-dihydroxy-3-methylpentanoate + NADP(+) = (S)-2-ethyl-2-hydroxy-3-oxobutanoate + NADPH + H(+). It functions in the pathway amino-acid biosynthesis; L-isoleucine biosynthesis; L-isoleucine from 2-oxobutanoate: step 2/4. The protein operates within amino-acid biosynthesis; L-valine biosynthesis; L-valine from pyruvate: step 2/4. In terms of biological role, involved in the biosynthesis of branched-chain amino acids (BCAA). Catalyzes an alkyl-migration followed by a ketol-acid reduction of (S)-2-acetolactate (S2AL) to yield (R)-2,3-dihydroxy-isovalerate. In the isomerase reaction, S2AL is rearranged via a Mg-dependent methyl migration to produce 3-hydroxy-3-methyl-2-ketobutyrate (HMKB). In the reductase reaction, this 2-ketoacid undergoes a metal-dependent reduction by NADPH to yield (R)-2,3-dihydroxy-isovalerate. This chain is Ketol-acid reductoisomerase (NADP(+)), found in Edwardsiella ictaluri (strain 93-146).